Reading from the N-terminus, the 181-residue chain is Ribosome maturation factor RimP (181 aa).

It belongs to the RimP family.

It localises to the cytoplasm. Functionally, required for maturation of 30S ribosomal subunits. The polypeptide is Ribosome maturation factor RimP (Sphingopyxis alaskensis (strain DSM 13593 / LMG 18877 / RB2256) (Sphingomonas alaskensis)).